A 171-amino-acid polypeptide reads, in one-letter code: 16S rRNA aminocarboxypropyltransferase (171 aa).

Residues Thr-18, Leu-68, Leu-91, and Ser-110 each contribute to the S-adenosyl-L-methionine site.

The protein belongs to the TDD superfamily. TSR3 family.

It is found in the cytoplasm. The enzyme catalyses an N(1)-methylpseudouridine in rRNA + S-adenosyl-L-methionine = N(1)-methyl-N(3)-[(3S)-3-amino-3-carboxypropyl]pseudouridine in rRNA + S-methyl-5'-thioadenosine + H(+). In terms of biological role, aminocarboxypropyltransferase that catalyzes the aminocarboxypropyl transfer on pseudouridine corresponding to position 914 in M.jannaschii 16S rRNA. It constitutes the last step in biosynthesis of the hypermodified N1-methyl-N3-(3-amino-3-carboxypropyl) pseudouridine (m1acp3-Psi). In Methanosphaera stadtmanae (strain ATCC 43021 / DSM 3091 / JCM 11832 / MCB-3), this protein is 16S rRNA aminocarboxypropyltransferase.